The primary structure comprises 154 residues: Myoglobin (154 aa).

In terms of domain architecture, Globin spans 2–148; the sequence is GLSDGEWELV…FRNDIAAKYK (147 aa). Ser4 bears the Phosphoserine mark. Thr68 carries the phosphothreonine modification. His94 serves as a coordination point for heme b.

Belongs to the globin family. As to quaternary structure, monomeric.

It localises to the cytoplasm. The protein resides in the sarcoplasm. It carries out the reaction Fe(III)-heme b-[protein] + nitric oxide + H2O = Fe(II)-heme b-[protein] + nitrite + 2 H(+). It catalyses the reaction H2O2 + AH2 = A + 2 H2O. Functionally, monomeric heme protein which primary function is to store oxygen and facilitate its diffusion within muscle tissues. Reversibly binds oxygen through a pentacoordinated heme iron and enables its timely and efficient release as needed during periods of heightened demand. Depending on the oxidative conditions of tissues and cells, and in addition to its ability to bind oxygen, it also has a nitrite reductase activity whereby it regulates the production of bioactive nitric oxide. Under stress conditions, like hypoxia and anoxia, it also protects cells against reactive oxygen species thanks to its pseudoperoxidase activity. This is Myoglobin (MB) from Elephas maximus (Indian elephant).